A 363-amino-acid chain; its full sequence is MGVLEKIQEIEAEMRRTQKNKATEYHLGLLKGKLAKLRAQLLEPTSKSGPKGEGFDVLKSGDARVAFIGFPSVGKSTLLSAITKTKSATASYEFTTLTAIPGVLEYDGAEIQMLDLPGIIEGASQGRGGRQAVSAARTADLILMVLDATKAADQREKIEYELEQVGIRLNRQPPNVTLTIKKNGGIKFNHTVPLTHMDYKMAYNILHEYRIHNADILIREDITVDDFIDLVMGNRRYINCLYCYSKIDAVSLEEVDRLARLPKSVVISCNMKLNLDFLKERIWEELNLYRIYTKRKGEMPDFSEALIVRKGSTIEQVCNRIHRTLAEQLKYALVWGTSAKHSPQVVGLNHRVEEGDVVTIVTK.

An OBG-type G domain is found at 63-287 (ARVAFIGFPS…LKERIWEELN (225 aa)). Residues 69-76 (GFPSVGKS), 115-119 (DLPGI), and 246-249 (KIDA) each bind GTP. The region spanning 287–362 (NLYRIYTKRK…EEGDVVTIVT (76 aa)) is the TGS domain.

The protein belongs to the TRAFAC class OBG-HflX-like GTPase superfamily. OBG GTPase family.

In Schizosaccharomyces pombe (strain 972 / ATCC 24843) (Fission yeast), this protein is GTP-binding protein 1 (gtp1).